Reading from the N-terminus, the 229-residue chain is Probable endo-1,4-beta-xylanase A (229 aa).

A signal peptide spans 1-18 (MVSFKYLFLAASALGALA). N-linked (GlcNAc...) asparagine glycans are attached at residues asparagine 30 and asparagine 100. The GH11 domain maps to 41-229 (AGTPSSTGWN…SSGSSSITVY (189 aa)). Catalysis depends on glutamate 125, which acts as the Nucleophile. Glutamate 216 serves as the catalytic Proton donor.

This sequence belongs to the glycosyl hydrolase 11 (cellulase G) family.

Its subcellular location is the secreted. The enzyme catalyses Endohydrolysis of (1-&gt;4)-beta-D-xylosidic linkages in xylans.. It functions in the pathway glycan degradation; xylan degradation. Endo-1,4-beta-xylanase involved in the hydrolysis of xylan, a major structural heterogeneous polysaccharide found in plant biomass representing the second most abundant polysaccharide in the biosphere, after cellulose. In Aspergillus clavatus (strain ATCC 1007 / CBS 513.65 / DSM 816 / NCTC 3887 / NRRL 1 / QM 1276 / 107), this protein is Probable endo-1,4-beta-xylanase A (xlnA).